A 1004-amino-acid chain; its full sequence is Ephrin type-A receptor 8 (1004 aa).

A signal peptide spans 1–26 (MAPARARLSPALWVVTAAAAATCVSA). Residues 27–541 (GRGEVNLLDT…KPRPRYDTRT (515 aa)) lie on the Extracellular side of the membrane. Residues 30 to 208 (EVNLLDTSTI…YYKKCPAMVR (179 aa)) enclose the Eph LBD domain. Fibronectin type-III domains are found at residues 327–437 (PPSA…TNQA) and 438–533 (APSQ…TGKP). Asparagine 339, asparagine 406, and asparagine 431 each carry an N-linked (GlcNAc...) asparagine glycan. Residues 542 to 562 (IVWICLTLITGLVVLLLLLIC) form a helical membrane-spanning segment. The mediates interaction with ANKS1A and ANKS1B stretch occupies residues 563–569 (KKRHCGY). At 563–1004 (KKRHCGYSKA…SSTQGPRRHL (442 aa)) the chain is on the cytoplasmic side. The tract at residues 588–643 (APPPVFLPLNHPPGKFPETQFSAEPHTYEEPGRAGRSFTREIEASRIHIEKIIGSG) is mediates interaction with PIK3CG and required for endocytosis. The residue at position 615 (tyrosine 615) is a Phosphotyrosine; by autocatalysis. The 262-residue stretch at 634–895 (IHIEKIIGSG…HVVSVLDALV (262 aa)) folds into the Protein kinase domain. ATP contacts are provided by residues 640–648 (IGSGESGEV) and lysine 666. The Proton acceptor role is filled by aspartate 759. Residue tyrosine 838 is modified to Phosphotyrosine; by autocatalysis. In terms of domain architecture, SAM spans 929 to 993 (NGDLTVGDWL…LGSIQTMRAQ (65 aa)). A PDZ-binding motif is present at residues 1002–1004 (RHL).

It belongs to the protein kinase superfamily. Tyr protein kinase family. Ephrin receptor subfamily. As to quaternary structure, heterotetramer upon binding of the ligand. The heterotetramer is composed of an ephrin dimer and a receptor dimer. Oligomerization is probably required to induce biological responses. May also form heterodimers with other ephrin receptors. Interacts with FYN; possible downstream effector of EPHA8 in regulation of cell adhesion. Interacts with PIK3CG; regulates integrin-mediated cell adhesion to substrate. Interacts with TIAM1; regulates clathrin-mediated endocytosis of EPHA8. Interacts with ANKS1A and ANKS1B; EPHA8 kinase activity-independent but stimulated by EPHA8 ubiquitination. In terms of processing, phosphorylated. Phosphorylation is stimulated upon binding of its ligands including EFNA2, EFNA3 and EFNA5. Autophosphorylation on Tyr-615 is critical for association with FYN. Autophosphorylation on Tyr-838 modulates tyrosine kinase activity. Post-translationally, ubiquitinated. Ubiquitination by CBL regulates the receptor stability and activity through proteasomal degradation. ANKS1A prevents ubiquitination and degradation. In terms of tissue distribution, specifically expressed in the central nervous system.

The protein localises to the cell membrane. The protein resides in the cell projection. It localises to the early endosome membrane. The catalysed reaction is L-tyrosyl-[protein] + ATP = O-phospho-L-tyrosyl-[protein] + ADP + H(+). In terms of biological role, receptor tyrosine kinase which binds promiscuously GPI-anchored ephrin-A family ligands residing on adjacent cells, leading to contact-dependent bidirectional signaling into neighboring cells. The signaling pathway downstream of the receptor is referred to as forward signaling while the signaling pathway downstream of the ephrin ligand is referred to as reverse signaling. The GPI-anchored ephrin-A EFNA2, EFNA3, and EFNA5 are able to activate EPHA8 through phosphorylation. With EFNA5 may regulate integrin-mediated cell adhesion and migration on fibronectin substrate but also neurite outgrowth. During development of the nervous system also plays a role in axon guidance. Downstream effectors of the EPHA8 signaling pathway include FYN which promotes cell adhesion upon activation by EPHA8 and the MAP kinases in the stimulation of neurite outgrowth. The polypeptide is Ephrin type-A receptor 8 (Epha8) (Mus musculus (Mouse)).